We begin with the raw amino-acid sequence, 394 residues long: Elongation factor Tu (394 aa).

In terms of domain architecture, tr-type G spans K10 to R205. A G1 region spans residues G19–T26. G19–T26 contacts GTP. T26 contacts Mg(2+). A G2 region spans residues G60–N64. The interval D81–G84 is G3. GTP-binding positions include D81–H85 and N136–D139. Residues N136 to D139 are G4. Positions S174–L176 are G5.

This sequence belongs to the TRAFAC class translation factor GTPase superfamily. Classic translation factor GTPase family. EF-Tu/EF-1A subfamily. In terms of assembly, monomer.

Its subcellular location is the cytoplasm. The catalysed reaction is GTP + H2O = GDP + phosphate + H(+). Functionally, GTP hydrolase that promotes the GTP-dependent binding of aminoacyl-tRNA to the A-site of ribosomes during protein biosynthesis. This is Elongation factor Tu from Bacteroides fragilis (strain ATCC 25285 / DSM 2151 / CCUG 4856 / JCM 11019 / LMG 10263 / NCTC 9343 / Onslow / VPI 2553 / EN-2).